The primary structure comprises 204 residues: HTH-type transcriptional activator BcrR (204 aa).

Residues 1 to 81 are Cytoplasmic-facing; that stretch reads MEFNEKLQQL…ETENRSNLKK (81 aa). One can recognise an HTH cro/C1-type domain in the interval 7–61; it reads LQQLRTGKNLTQEQLAEQLYVSRTAISKWESGKGYPNMESLKCISKFFSVTIDEL. The H-T-H motif DNA-binding region spans 18-37; the sequence is QEQLAEQLYVSRTAISKWES. Residues 82–102 traverse the membrane as a helical segment; the sequence is IYNYIYGILDMMAVAFIFLPL. Over 103-126 the chain is Extracellular; sequence YGNSVGGYVYAVNLLSFTATTPFN. A helical membrane pass occupies residues 127-147; the sequence is LAVYWSAFAALIIIGIGKIIS. Topologically, residues 148–154 are cytoplasmic; the sequence is THLDKEK. The helical transmembrane segment at 155–175 threads the bilayer; it reads WGGIATKCSLTITALAVCFFA. The Extracellular portion of the chain corresponds to 176 to 181; the sequence is AAREPY. Residues 182–202 traverse the membrane as a helical segment; sequence ITVLVFLLLIGKIFVWIKQMG. Topologically, residues 203 to 204 are cytoplasmic; that stretch reads MK.

Its subcellular location is the cell membrane. Its activity is regulated as follows. Constitutively bound to the bcrABD promoter. Requires bacitracin for activation, probably through a conformational change, such as the oligomerization of inactive dimers to form active tetramers. Functionally, functions both as a membrane-bound sensor and a transducer of bacitracin availability to activate transcription of the bcrABD operon in the presence of bacitracin. Binds specifically to two inverted repeat sequences on the bcrABD promoter, irrespective of bacitracin concentration. This Enterococcus faecalis (Streptococcus faecalis) protein is HTH-type transcriptional activator BcrR.